The sequence spans 143 residues: HTH-type transcriptional regulator MntR (143 aa).

The 63-residue stretch at 1–63 folds into the HTH dtxR-type domain; that stretch reads MPTPSMEDYL…YERYRGLVLT (63 aa). D8, E11, H77, E99, E102, and H103 together coordinate Mn(2+).

The protein belongs to the DtxR/MntR family. In terms of assembly, homodimer.

It is found in the cytoplasm. Its activity is regulated as follows. DNA binding is strongly activated by Mn(2+). Central regulator of manganese homeostasis. This Shouchella clausii (strain KSM-K16) (Alkalihalobacillus clausii) protein is HTH-type transcriptional regulator MntR.